The primary structure comprises 458 residues: MKPSQPLCNRIVDQLITAMIQNRPFDAVLASSTVAKPWTQQLVSDVLHSIPRFFFISPRSIGRQKGFRHRSPLKQRNLSDESQRRRSEVLVLGPGAYMDPKKVSIGLQKALEFFFWIETHFGFDHNEITCRDMACLLAKGNDFKGLWDFLRQVSRRENGKNVVTTASITCLMKCLGEEGFVKEALATFYRMKEYHCKPDVYAYNTIINALCRVGNFKKARFLLDQMQLPGFRYPPDTYTYTILISSYCRYGMQTGCRKAIRRRMWEANRMFREMLFRGFVPDVVTYNCLIDGCCKTNRIGRALELFEDMKTKGCVPNQVTYNSFIRYYSVTNEIEGAIEMMRTMKKLGHGVPGSSTYTPLIHALVETRRAAEARDLVVEMVEAGLVPREYTYKLVCDALSSEGLASTLDEELHKRMREGIQQRYSRVMKIKPTMARKEVVRKYFHKIDGNQNFAMEEI.

7 PPR repeats span residues 164-198 (TTAS…HCKP), 199-233 (DVYA…GFRY), 236-271 (DTYT…NRMF), 282-316 (DVVT…GCVP), 317-351 (NQVT…GHGV), 353-387 (GSST…GLVP), and 388-419 (REYT…MREG).

Belongs to the PPR family. P subfamily.

This Arabidopsis thaliana (Mouse-ear cress) protein is Pentatricopeptide repeat-containing protein At1g77405.